The primary structure comprises 727 residues: Synaptic vesicle glycoprotein 2C (727 aa).

Residues 1 to 57 (MEDSYKDRTSLMKGAKDIAKEVKKQTVKKVNQAVDRAQDEYTQRSYSRFQDEDDDDD) are interaction with SYT1. The Cytoplasmic portion of the chain corresponds to 1–154 (MEDSYKDRTS…CGHGRFQWAL (154 aa)). A disordered region spans residues 22–120 (VKKQTVKKVN…QPKGDEYKDR (99 aa)). 2 positions are modified to phosphoserine: Ser75 and Ser76. Phosphothreonine is present on Thr79. The chain crosses the membrane as a helical span at residues 155–175 (FFVLGMALMADGVEVFVVGFV). The Extracellular portion of the chain corresponds to 176-191 (LPSAETDLCIPNSGSG). Residues 192–212 (WLGSIVYLGMMVGAFFWGGLA) form a helical membrane-spanning segment. Residues 213–226 (DKVGRKQSLLICMS) lie on the Cytoplasmic side of the membrane. The helical transmembrane segment at 227–247 (VNGFFAFLSSFVQGYGFFLLC) threads the bilayer. Arg248 is a topological domain (extracellular). Residues 249 to 269 (LLSGFGIGGAIPTVFSYFAEV) form a helical membrane-spanning segment. Residues 270 to 280 (LAREKRGEHLS) lie on the Cytoplasmic side of the membrane. Residues 281–301 (WLCMFWMIGGIYASAMAWAII) traverse the membrane as a helical segment. Residues 302–320 (PHYGWSFSMGSAYQFHSWR) are Extracellular-facing. Residues 321-341 (VFVIVCALPCVSSVVALTFMP) traverse the membrane as a helical segment. The Cytoplasmic portion of the chain corresponds to 342–437 (ESPRFLLEVG…PVRENTIKLT (96 aa)). A helical transmembrane segment spans residues 438-458 (IVWFTLSFGYYGLSVWFPDVI). Residues 459 to 578 (KHLQSDEYAL…CQITFDDDYS (120 aa)) are Extracellular-facing. Tyr466 is subject to Phosphotyrosine. 5 N-linked (GlcNAc...) asparagine glycosylation sites follow: Asn480, Asn484, Asn534, Asn559, and Asn565. The segment at 529 to 566 (NTYFKNCTFIDTLFENTDFEPYKFIDSEFQNCSFLHNK) is (Microbial infection) C.botulinum neurotoxin type A-binding. A helical membrane pass occupies residues 579 to 599 (AYWIYFVNFLGTLAVLPGNIV). Over 600–609 (SALLMDRIGR) the chain is Cytoplasmic. A helical transmembrane segment spans residues 610–630 (LTMLGGSMVLSGISCFFLWFG). The Extracellular portion of the chain corresponds to 631–636 (TSESMM). The helical transmembrane segment at 637 to 657 (IGMLCLYNGLTISAWNSLDVV) threads the bilayer. The Cytoplasmic portion of the chain corresponds to 658–670 (TVELYPTDRRATG). The chain crosses the membrane as a helical span at residues 671 to 693 (FGFLNALCKAAAVLGNLIFGSLV). The Extracellular segment spans residues 694-697 (SITK). A helical transmembrane segment spans residues 698 to 716 (AIPILLASTVLVCGGLVGL). Topologically, residues 717-727 (RLPDTRTQVLM) are cytoplasmic.

This sequence belongs to the major facilitator superfamily. As to quaternary structure, interacts with SYT1 in a calcium-dependent manner. (Microbial infection) Interacts with C.botulinum neurotoxin type A (BoNT/A, botA). In terms of assembly, (Microbial infection) Interacts with C.botulinum neurotoxin type F (BoNT/F). Interaction requires glycosylation of SV2 proteins. In terms of processing, N-glycosylated. Expressed at high levels in very few brain areas including the striatum, midbrain and hindbrain, and in the olfactory bulb. Expressed at lower levels in cerebrum, hippocampus and cerebellum (at protein level). Mainly expressed in brain; also detected in lung, liver, kidney.

It is found in the cytoplasmic vesicle. The protein localises to the secretory vesicle. The protein resides in the synaptic vesicle membrane. Plays a role in the control of regulated secretion in neural and endocrine cells, enhancing selectively low-frequency neurotransmission. Positively regulates vesicle fusion by maintaining the readily releasable pool of secretory vesicles. Its function is as follows. (Microbial infection) Receptor for C.botulinum neurotoxin type A (BoNT/A, botA); the toxin binds Sv2c via extracellular loop 4. Restores uptake of BoNT/A in rat cells that are deleted for SV2 receptor. In terms of biological role, (Microbial infection) Possible receptor for C.botulinum neurotoxin type D (BoNT/D, botD); BoNT/D does not bind to extracellular loop 4 as do BoNT/A and BoNT/E. Another group does not find a convincing interaction with SV2. Functionally, (Microbial infection) Receptor for C.botulinum neurotoxin type F (BoNT/F); binding requires glycosylation of Asn-573. This chain is Synaptic vesicle glycoprotein 2C (Sv2c), found in Rattus norvegicus (Rat).